The following is a 119-amino-acid chain: Evasin P983 (119 aa).

Positions 1–21 (MKASFCVIASCLVVFALKGTA) are cleaved as a signal peptide. 4 cysteine pairs are disulfide-bonded: Cys37–Cys59, Cys55–Cys97, Cys72–Cys102, and Cys92–Cys111. Residues Asn48 and Asn67 are each glycosylated (N-linked (GlcNAc...) asparagine).

The protein resides in the secreted. Salivary chemokine-binding protein which binds to host chemokines CCL2, CCL3 and CCL8. The protein is Evasin P983 of Amblyomma cajennense (Cayenne tick).